Reading from the N-terminus, the 241-residue chain is 1-(5-phosphoribosyl)-5-[(5-phosphoribosylamino)methylideneamino] imidazole-4-carboxamide isomerase (241 aa).

Asp10 (proton acceptor) is an active-site residue. The active-site Proton donor is the Asp129.

Belongs to the HisA/HisF family.

It localises to the cytoplasm. It carries out the reaction 1-(5-phospho-beta-D-ribosyl)-5-[(5-phospho-beta-D-ribosylamino)methylideneamino]imidazole-4-carboxamide = 5-[(5-phospho-1-deoxy-D-ribulos-1-ylimino)methylamino]-1-(5-phospho-beta-D-ribosyl)imidazole-4-carboxamide. Its pathway is amino-acid biosynthesis; L-histidine biosynthesis; L-histidine from 5-phospho-alpha-D-ribose 1-diphosphate: step 4/9. The sequence is that of 1-(5-phosphoribosyl)-5-[(5-phosphoribosylamino)methylideneamino] imidazole-4-carboxamide isomerase from Salinispora arenicola (strain CNS-205).